A 404-amino-acid chain; its full sequence is Na(+)/H(+) antiporter NhaA 2 (404 aa).

11 helical membrane passes run 24-44 (GIILLICAIAAIMIANSSFSG), 67-87 (VLHWINDGLMAIFFLVVGMEI), 103-123 (ILPISAAIGGMIVPAIIYALF), 132-152 (GWGIPMATDIAFALGMLSLVA), 161-181 (VFLTALAIVDDLGAIIVIAIF), 184-204 (SQISWIALLLGLIVFATLILA), 216-236 (IILGIILWICLLKSGIHATIA), 266-286 (TPWSSFVIMPIFAFANAGIII), 303-323 (IIFGLFVGKQIGIFGTSFILI), 339-359 (LYGASVFGGIGFTMSIFVSSL), and 372-392 (MCIMIASILAATYGTIVFKFI).

This sequence belongs to the NhaA Na(+)/H(+) (TC 2.A.33) antiporter family.

The protein localises to the cell membrane. The catalysed reaction is Na(+)(in) + 2 H(+)(out) = Na(+)(out) + 2 H(+)(in). Its function is as follows. Na(+)/H(+) antiporter that extrudes sodium in exchange for external protons. The chain is Na(+)/H(+) antiporter NhaA 2 from Clostridium beijerinckii (strain ATCC 51743 / NCIMB 8052) (Clostridium acetobutylicum).